Here is a 195-residue protein sequence, read N- to C-terminus: Imidazoleglycerol-phosphate dehydratase (195 aa).

Belongs to the imidazoleglycerol-phosphate dehydratase family.

It localises to the cytoplasm. The catalysed reaction is D-erythro-1-(imidazol-4-yl)glycerol 3-phosphate = 3-(imidazol-4-yl)-2-oxopropyl phosphate + H2O. It participates in amino-acid biosynthesis; L-histidine biosynthesis; L-histidine from 5-phospho-alpha-D-ribose 1-diphosphate: step 6/9. The chain is Imidazoleglycerol-phosphate dehydratase from Cereibacter sphaeroides (strain ATCC 17029 / ATH 2.4.9) (Rhodobacter sphaeroides).